Consider the following 156-residue polypeptide: MIYILEGLDGTGKTSFASELIKSQVFSRPMYVYFSKEDSYENTKLAWVSLIKELSKLNFNIIMDRSIISTIAYHFTYRPSKEYENFIRSELESVLNLDPSKAVFIHFVKVHDSKKLLEYANRVKSIRDNYHLLMRILREKGFNVIVNGGQKDFNLF.

Position 7–14 (7–14 (GLDGTGKT)) interacts with ATP.

This sequence belongs to the thymidylate kinase family.

The enzyme catalyses dTMP + ATP = dTDP + ADP. The protein operates within pyrimidine metabolism; dTTP biosynthesis. Functionally, catalyzes the conversion of dTMP to dTDP. The polypeptide is Putative thymidylate kinase (Acidianus convivator (ABV)).